Reading from the N-terminus, the 181-residue chain is MADIETKSSQNQPLKTQNIFIGAQIFLRIVVIAASFASTWLMLTNKQTIDIGGFVLDANYSYSPEFKFLSYANIVVGAFSFVSLLFLVLVGRRSSNPTYYFILFLHDLALMSLVLGGCAAATVIGSLGKYGNSHTGWMQICDHFGKFCKRATTSVAFSYFSLVCLLILTITSASKSRQIQV.

The Cytoplasmic portion of the chain corresponds to 1–18 (MADIETKSSQNQPLKTQN). A helical transmembrane segment spans residues 19–39 (IFIGAQIFLRIVVIAASFAST). Residues 40 to 70 (WLMLTNKQTIDIGGFVLDANYSYSPEFKFLS) lie on the Extracellular side of the membrane. An N-linked (GlcNAc...) asparagine glycan is attached at Asn-59. Residues 71-91 (YANIVVGAFSFVSLLFLVLVG) traverse the membrane as a helical segment. Topologically, residues 92–100 (RRSSNPTYY) are cytoplasmic. The helical transmembrane segment at 101-121 (FILFLHDLALMSLVLGGCAAA) threads the bilayer. The Extracellular segment spans residues 122-150 (TVIGSLGKYGNSHTGWMQICDHFGKFCKR). Residues 151-171 (ATTSVAFSYFSLVCLLILTIT) traverse the membrane as a helical segment. Topologically, residues 172 to 181 (SASKSRQIQV) are cytoplasmic.

Belongs to the Casparian strip membrane proteins (CASP) family. In terms of assembly, homodimer and heterodimers.

It localises to the cell membrane. This is CASP-like protein 1F2 from Populus trichocarpa (Western balsam poplar).